The sequence spans 294 residues: Maltose/maltodextrin import ATP-binding protein MalK (294 aa).

The ABC transporter domain occupies 4-233 (VQLRNVTKAW…PADRFVAGFI (230 aa)). 36–43 (GPSGCGKS) is an ATP binding site.

The protein belongs to the ABC transporter superfamily. Maltooligosaccharide importer (TC 3.A.1.1.1) family. The complex is composed of two ATP-binding proteins (MalK), two transmembrane proteins (MalG and MalK) and a solute-binding protein (MalE).

It is found in the cell inner membrane. It catalyses the reaction D-maltose(out) + ATP + H2O = D-maltose(in) + ADP + phosphate + H(+). Its function is as follows. Part of the ABC transporter complex MalEFGK involved in maltose/maltodextrin import. Responsible for energy coupling to the transport system. In Klebsiella aerogenes (Enterobacter aerogenes), this protein is Maltose/maltodextrin import ATP-binding protein MalK.